The chain runs to 87 residues: uncharacterized protein (87 aa).

Transmembrane regions (helical) follow at residues 7–27 (LFFI…LYSI) and 64–84 (GINI…IPLF).

Its subcellular location is the membrane. This is an uncharacterized protein from Schizosaccharomyces pombe (strain 972 / ATCC 24843) (Fission yeast).